A 350-amino-acid polypeptide reads, in one-letter code: Histidinol-phosphate aminotransferase (350 aa).

Lys-209 carries the N6-(pyridoxal phosphate)lysine modification.

Belongs to the class-II pyridoxal-phosphate-dependent aminotransferase family. Histidinol-phosphate aminotransferase subfamily. Homodimer. Pyridoxal 5'-phosphate is required as a cofactor.

The enzyme catalyses L-histidinol phosphate + 2-oxoglutarate = 3-(imidazol-4-yl)-2-oxopropyl phosphate + L-glutamate. It functions in the pathway amino-acid biosynthesis; L-histidine biosynthesis; L-histidine from 5-phospho-alpha-D-ribose 1-diphosphate: step 7/9. The chain is Histidinol-phosphate aminotransferase from Citrifermentans bemidjiense (strain ATCC BAA-1014 / DSM 16622 / JCM 12645 / Bem) (Geobacter bemidjiensis).